Here is a 479-residue protein sequence, read N- to C-terminus: Zinc finger and SCAN domain-containing protein 26 (479 aa).

Lys17 is covalently cross-linked (Glycyl lysine isopeptide (Lys-Gly) (interchain with G-Cter in SUMO2)). One can recognise an SCAN box domain in the interval 51–133 (CKRFRQLRYE…VFLEDLQLEL (83 aa)). A disordered region spans residues 155-187 (TAPGKATPERQVQPEGDVPQPEREKGEAKRIEN). Residues 174–187 (QPEREKGEAKRIEN) show a composition bias toward basic and acidic residues. A C2H2-type 1; degenerate zinc finger spans residues 232 to 254 (CKCSEYGQAFFQHSDLIKHESSH). 7 consecutive C2H2-type zinc fingers follow at residues 283-305 (HQCHECGKAFQRSSHLVRHQKIH), 311-333 (YQCKECGKVFSQNAGLLEHLRIH), 339-361 (YLCIHCGKNFRRSSHLNRHQRIH), 367-389 (CQCKECGKTFSQALLLTHHQRIH), 395-417 (HQCNECGKTFSLTSDLIRHHRIH), 423-445 (FKCTICQKAFRLNSHLAQHVRIH), and 451-473 (YKCNECGEAFRQRSGLFQHQRYH).

It localises to the nucleus. Functionally, may be involved in transcriptional regulation. In Bos taurus (Bovine), this protein is Zinc finger and SCAN domain-containing protein 26 (ZSCAN26).